The sequence spans 232 residues: Enolase-phosphatase E1 (232 aa).

The protein belongs to the HAD-like hydrolase superfamily. MasA/MtnC family. As to quaternary structure, monomer. The cofactor is Mg(2+).

It catalyses the reaction 5-methylsulfanyl-2,3-dioxopentyl phosphate + H2O = 1,2-dihydroxy-5-(methylsulfanyl)pent-1-en-3-one + phosphate. The protein operates within amino-acid biosynthesis; L-methionine biosynthesis via salvage pathway; L-methionine from S-methyl-5-thio-alpha-D-ribose 1-phosphate: step 3/6. It functions in the pathway amino-acid biosynthesis; L-methionine biosynthesis via salvage pathway; L-methionine from S-methyl-5-thio-alpha-D-ribose 1-phosphate: step 4/6. In terms of biological role, bifunctional enzyme that catalyzes the enolization of 2,3-diketo-5-methylthiopentyl-1-phosphate (DK-MTP-1-P) into the intermediate 2-hydroxy-3-keto-5-methylthiopentenyl-1-phosphate (HK-MTPenyl-1-P), which is then dephosphorylated to form the acireductone 1,2-dihydroxy-3-keto-5-methylthiopentene (DHK-MTPene). This is Enolase-phosphatase E1 from Xylella fastidiosa (strain Temecula1 / ATCC 700964).